Reading from the N-terminus, the 435-residue chain is MSYRPGSYSVSSMRPVGSVRSSQVMTVQRSMPLASAASVYGGAGGRGSRISVGGSSSGFGSGLGSGAGGSYSSMSVSGSGLVGNEKETMIGLNDRLAAYLETVRNLEQANSKLEFQIREALEKKGPTTRDLSPFEKTLEDLRKKVYDMTMDNSRLVLQIDNSRLAADDFRVKFESEYSIRQSVESDIIGLRKVIDDTNMGRMNLESEIESLKEELIFIKQNHNQEVNDLRNQIAQSGVQVDVDAPKGQDLAQVLAEVRAQYESMAQKNRDELKAWHENKLTEVEVEVIQNTEALQGARTEVTELRRQMQSLEIELESQRSMKASLEDSLRDTEMRNNMEMERYNNMILQLEAELGQLRGNIQMQASEYEALLNIKMKLEAEIATYRRLLDGEDFRLQDALVDQSSTKSIKKVTVTQTLVDGKVVSESTNTKEIGK.

The interval 2–84 is head; that stretch reads SYRPGSYSVS…SVSGSGLVGN (83 aa). The coil 1A stretch occupies residues 85–120; it reads EKETMIGLNDRLAAYLETVRNLEQANSKLEFQIREA. Residues 85-396 enclose the IF rod domain; that stretch reads EKETMIGLND…RLLDGEDFRL (312 aa). Positions 121 to 137 are linker 1; sequence LEKKGPTTRDLSPFEKT. Residues 138 to 229 are coil 1B; the sequence is LEDLRKKVYD…QNHNQEVNDL (92 aa). Residues 230–253 are linker 12; it reads RNQIAQSGVQVDVDAPKGQDLAQV. Positions 254-391 are coil 2; it reads LAEVRAQYES…IATYRRLLDG (138 aa). The tail stretch occupies residues 392 to 435; it reads EDFRLQDALVDQSSTKSIKKVTVTQTLVDGKVVSESTNTKEIGK.

This sequence belongs to the intermediate filament family. Heterotetramer of two type I and two type II keratins. Keratin-18 associates with keratin-8. In terms of processing, phosphorylated. Post-translationally, proteolytically cleaved by caspases during epithelial cell apoptosis.

In terms of biological role, when phosphorylated, plays a role in filament reorganization. This chain is Keratin, type I cytoskeletal 18, found in Acipenser baerii (Siberian sturgeon).